Consider the following 200-residue polypeptide: Probable GTP-binding protein EngB (200 aa).

The region spanning 22–199 (GLDEIALAGR…KDWIQARLYE (178 aa)) is the EngB-type G domain. Residues 30 to 37 (GRSNVGKS), 57 to 61 (GKTQT), 78 to 81 (DVPG), 145 to 148 (TKMD), and 178 to 180 (FSS) each bind GTP. Positions 37 and 59 each coordinate Mg(2+).

It belongs to the TRAFAC class TrmE-Era-EngA-EngB-Septin-like GTPase superfamily. EngB GTPase family. It depends on Mg(2+) as a cofactor.

Necessary for normal cell division and for the maintenance of normal septation. In Lactobacillus delbrueckii subsp. bulgaricus (strain ATCC 11842 / DSM 20081 / BCRC 10696 / JCM 1002 / NBRC 13953 / NCIMB 11778 / NCTC 12712 / WDCM 00102 / Lb 14), this protein is Probable GTP-binding protein EngB.